Consider the following 205-residue polypeptide: High frequency lysogenization protein HflD homolog (205 aa).

Belongs to the HflD family.

Its subcellular location is the cytoplasm. The protein localises to the cell inner membrane. The protein is High frequency lysogenization protein HflD homolog of Shewanella baltica (strain OS155 / ATCC BAA-1091).